The chain runs to 359 residues: Methionine import ATP-binding protein MetN (359 aa).

The interval 1–21 (MSTPASTPAPDGSHQRDHHPG) is disordered. The ABC transporter domain maps to 24–264 (VEFRGVTKVF…PQTTVAQRFV (241 aa)). 61-68 (GYSGAGKS) is a binding site for ATP.

Belongs to the ABC transporter superfamily. Methionine importer (TC 3.A.1.24) family. As to quaternary structure, the complex is composed of two ATP-binding proteins (MetN), two transmembrane proteins (MetI) and a solute-binding protein (MetQ).

It localises to the cell membrane. The enzyme catalyses L-methionine(out) + ATP + H2O = L-methionine(in) + ADP + phosphate + H(+). It carries out the reaction D-methionine(out) + ATP + H2O = D-methionine(in) + ADP + phosphate + H(+). Part of the ABC transporter complex MetNIQ involved in methionine import. Responsible for energy coupling to the transport system. The sequence is that of Methionine import ATP-binding protein MetN from Corynebacterium efficiens (strain DSM 44549 / YS-314 / AJ 12310 / JCM 11189 / NBRC 100395).